The chain runs to 360 residues: UDP-N-acetylglucosamine--N-acetylmuramyl-(pentapeptide) pyrophosphoryl-undecaprenol N-acetylglucosamine transferase (360 aa).

UDP-N-acetyl-alpha-D-glucosamine is bound by residues 15–17 (TGG), Asn124, Arg165, Ser191, and Gln285.

It belongs to the glycosyltransferase 28 family. MurG subfamily.

It is found in the cell inner membrane. The catalysed reaction is di-trans,octa-cis-undecaprenyl diphospho-N-acetyl-alpha-D-muramoyl-L-alanyl-D-glutamyl-meso-2,6-diaminopimeloyl-D-alanyl-D-alanine + UDP-N-acetyl-alpha-D-glucosamine = di-trans,octa-cis-undecaprenyl diphospho-[N-acetyl-alpha-D-glucosaminyl-(1-&gt;4)]-N-acetyl-alpha-D-muramoyl-L-alanyl-D-glutamyl-meso-2,6-diaminopimeloyl-D-alanyl-D-alanine + UDP + H(+). It functions in the pathway cell wall biogenesis; peptidoglycan biosynthesis. Its function is as follows. Cell wall formation. Catalyzes the transfer of a GlcNAc subunit on undecaprenyl-pyrophosphoryl-MurNAc-pentapeptide (lipid intermediate I) to form undecaprenyl-pyrophosphoryl-MurNAc-(pentapeptide)GlcNAc (lipid intermediate II). This is UDP-N-acetylglucosamine--N-acetylmuramyl-(pentapeptide) pyrophosphoryl-undecaprenol N-acetylglucosamine transferase from Gloeothece citriformis (strain PCC 7424) (Cyanothece sp. (strain PCC 7424)).